A 521-amino-acid chain; its full sequence is Glycogen synthase (521 aa).

K18 lines the ADP-alpha-D-glucose pocket.

Belongs to the glycosyltransferase 1 family. Bacterial/plant glycogen synthase subfamily.

The catalysed reaction is [(1-&gt;4)-alpha-D-glucosyl](n) + ADP-alpha-D-glucose = [(1-&gt;4)-alpha-D-glucosyl](n+1) + ADP + H(+). It functions in the pathway glycan biosynthesis; glycogen biosynthesis. Functionally, synthesizes alpha-1,4-glucan chains using ADP-glucose. The sequence is that of Glycogen synthase from Bordetella petrii (strain ATCC BAA-461 / DSM 12804 / CCUG 43448).